Consider the following 211-residue polypeptide: Sec-independent protein translocase protein TatB (211 aa).

Residues 1 to 21 (MFDIGVGELTLIAVVALVVLG) traverse the membrane as a helical segment. The interval 175-211 (AHLTSAPAPPVTVAPVDAGTSASPTPSEPTKIQEKQP) is disordered. A compositionally biased stretch (polar residues) spans 194–204 (TSASPTPSEPT).

Belongs to the TatB family. In terms of assembly, the Tat system comprises two distinct complexes: a TatABC complex, containing multiple copies of TatA, TatB and TatC subunits, and a separate TatA complex, containing only TatA subunits. Substrates initially bind to the TatABC complex, which probably triggers association of the separate TatA complex to form the active translocon.

It is found in the cell inner membrane. In terms of biological role, part of the twin-arginine translocation (Tat) system that transports large folded proteins containing a characteristic twin-arginine motif in their signal peptide across membranes. Together with TatC, TatB is part of a receptor directly interacting with Tat signal peptides. TatB may form an oligomeric binding site that transiently accommodates folded Tat precursor proteins before their translocation. The sequence is that of Sec-independent protein translocase protein TatB from Xanthomonas oryzae pv. oryzae (strain MAFF 311018).